A 202-amino-acid chain; its full sequence is Orotate phosphoribosyltransferase (202 aa).

Residues arginine 94, lysine 98, histidine 100, and 120–128 (EDLISTGGS) each bind 5-phospho-alpha-D-ribose 1-diphosphate. Serine 124 contacts orotate.

This sequence belongs to the purine/pyrimidine phosphoribosyltransferase family. PyrE subfamily. Homodimer. Requires Mg(2+) as cofactor.

It carries out the reaction orotidine 5'-phosphate + diphosphate = orotate + 5-phospho-alpha-D-ribose 1-diphosphate. The protein operates within pyrimidine metabolism; UMP biosynthesis via de novo pathway; UMP from orotate: step 1/2. In terms of biological role, catalyzes the transfer of a ribosyl phosphate group from 5-phosphoribose 1-diphosphate to orotate, leading to the formation of orotidine monophosphate (OMP). The chain is Orotate phosphoribosyltransferase from Staphylococcus haemolyticus (strain JCSC1435).